Here is a 558-residue protein sequence, read N- to C-terminus: MAEFIYTMKKVRKAHGDKVILDDVTLSFYPGAKIGVVGPNGAGKSSVLRIMAGLDKPNNGDAFLATGATVGILQQEPPLNEDKTVRGNVEEGMGDIKIKLDRFNEVAELMATDYTDELMEEMGRLQEELDHADAWDLDAQLEQAMDALRCPPADEPVTNLSGGERRRVALCKLLLSKPDLLLLDEPTNHLDAESVQWLEQHLASYPGAILAVTHDRYFLDNVAEWILELDRGRAYPYEGNYSTYLEKKAERLAVQGRKDAKLQKRLTEELAWVRSGAKARQAKSKARLQRYEEMAAEAEKTRKLDFEEIQIPVGPRLGNVVVEVDHLDKGYDGRALIKDLSFSLPRNGIVGVIGPNGVGKTTLFKTIVGLETPDSGSVKVGETVKLSYVDQARAGIDPRKTVWEVVSDGLDYIQVGQTEVPSRAYVSAFGFKGPDQQKPAGVLSGGERNRLNLALTLKQGGNLILLDEPTNDLDVETLGSLENALLNFPGCAVVISHDRWFLDRTCTHILAWEGDDDNEAKWFWFEGNFGAYEENKVERLGVDAARPHRVTHRKLTRG.

ABC transporter domains are found at residues 6–256 (YTMK…AVQG) and 322–552 (VEVD…RVTH). 38–45 (GPNGAGKS) is an ATP binding site. The arm stretch occupies residues 94-136 (GDIKIKLDRFNEVAELMATDYTDELMEEMGRLQEELDHADAWD). The interval 239–320 (GNYSTYLEKK…IPVGPRLGNV (82 aa)) is ptIM. An ATP-binding site is contributed by 354-361 (GPNGVGKT).

It belongs to the ABC transporter superfamily. ABCF family. Translational throttle EttA subfamily. Monomer. Probably contacts ribosomal proteins L1, L5, L33 and S7, the 16S and 23S rRNA and the P-site containing tRNA(fMet).

The protein localises to the cytoplasm. The enzyme catalyses ATP + H2O = ADP + phosphate + H(+). In terms of biological role, a translation factor that gates the progression of the 70S ribosomal initiation complex (IC, containing tRNA(fMet) in the P-site) into the translation elongation cycle by using a mechanism sensitive to the ATP/ADP ratio. Binds to the 70S ribosome E-site where it modulates the state of the translating ribosome during subunit translocation. ATP hydrolysis probably frees it from the ribosome, which can enter the elongation phase. This Mycobacterium tuberculosis (strain CDC 1551 / Oshkosh) protein is Energy-dependent translational throttle protein EttA.